The sequence spans 217 residues: MERHFMDSQIKGVSTGTTILAVTFNGGVIIGSDSRASIGGSYVSSKTINKLIQVHDRIFCCIAGSLADAQAVTKAAKFQISFHSIQMESPPLVKAAASVLKELCYNNKEELQAGFITAGWDRKKGPQVYTVALGGMLLSQPFTIGGSGSTYIYGYADAKYKPDMSKEECLQFATNALALAMGRDNVSGGVAHLVVITEEGVEHVVIPGDKLPKFHDE.

Residues 1–16 (MERHFMDSQIKGVSTG) constitute a propeptide, removed in mature form. Residue T17 is the Nucleophile of the active site.

This sequence belongs to the peptidase T1B family. In terms of assembly, the 26S proteasome consists of a 20S proteasome core and two 19S regulatory subunits. The 20S proteasome core is composed of 28 subunits that are arranged in four stacked rings, resulting in a barrel-shaped structure. The two end rings are each formed by seven alpha subunits, and the two central rings are each formed by seven beta subunits. The catalytic chamber with the active sites is on the inside of the barrel.

It is found in the cytoplasm. The protein localises to the nucleus. It carries out the reaction Cleavage of peptide bonds with very broad specificity.. Its function is as follows. The proteasome is a multicatalytic proteinase complex which is characterized by its ability to cleave peptides with Arg, Phe, Tyr, Leu, and Glu adjacent to the leaving group at neutral or slightly basic pH. The proteasome has an ATP-dependent proteolytic activity. This subunit is involved in antigen processing to generate class I binding peptides. The protein is Proteasome subunit beta type-6-B like protein (psmb6l-b) of Salmo salar (Atlantic salmon).